A 452-amino-acid polypeptide reads, in one-letter code: tRNA modification GTPase MnmE (452 aa).

3 residues coordinate (6S)-5-formyl-5,6,7,8-tetrahydrofolate: Arg21, Glu82, and Arg121. The region spanning 217 to 373 (GINTTIIGKP…LENKIIEMFN (157 aa)) is the TrmE-type G domain. Asn227 is a binding site for K(+). GTP-binding positions include 227–232 (NVGKSS), 246–252 (TDIPGTT), and 271–274 (DTAG). Position 231 (Ser231) interacts with Mg(2+). K(+)-binding residues include Thr246, Ile248, and Thr251. Mg(2+) is bound at residue Thr252. Lys452 provides a ligand contact to (6S)-5-formyl-5,6,7,8-tetrahydrofolate.

This sequence belongs to the TRAFAC class TrmE-Era-EngA-EngB-Septin-like GTPase superfamily. TrmE GTPase family. Homodimer. Heterotetramer of two MnmE and two MnmG subunits. It depends on K(+) as a cofactor.

It localises to the cytoplasm. Exhibits a very high intrinsic GTPase hydrolysis rate. Involved in the addition of a carboxymethylaminomethyl (cmnm) group at the wobble position (U34) of certain tRNAs, forming tRNA-cmnm(5)s(2)U34. The sequence is that of tRNA modification GTPase MnmE from Finegoldia magna (strain ATCC 29328 / DSM 20472 / WAL 2508) (Peptostreptococcus magnus).